The sequence spans 299 residues: Recombination-associated protein RdgC (299 aa).

Belongs to the RdgC family.

It localises to the cytoplasm. It is found in the nucleoid. In terms of biological role, may be involved in recombination. In Neisseria meningitidis serogroup A / serotype 4A (strain DSM 15465 / Z2491), this protein is Recombination-associated protein RdgC.